We begin with the raw amino-acid sequence, 155 residues long: S-ribosylhomocysteine lyase (155 aa).

Fe cation-binding residues include His-57, His-61, and Cys-124.

This sequence belongs to the LuxS family. Homodimer. Fe cation is required as a cofactor.

The catalysed reaction is S-(5-deoxy-D-ribos-5-yl)-L-homocysteine = (S)-4,5-dihydroxypentane-2,3-dione + L-homocysteine. Involved in the synthesis of autoinducer 2 (AI-2) which is secreted by bacteria and is used to communicate both the cell density and the metabolic potential of the environment. The regulation of gene expression in response to changes in cell density is called quorum sensing. Catalyzes the transformation of S-ribosylhomocysteine (RHC) to homocysteine (HC) and 4,5-dihydroxy-2,3-pentadione (DPD). The chain is S-ribosylhomocysteine lyase from Listeria monocytogenes serotype 4b (strain CLIP80459).